The primary structure comprises 216 residues: Ceramide-1-phosphate transfer protein (216 aa).

An N-acylsphingoid base 1-phosphate is bound by residues D56, K60, R108, R112, and H152.

This sequence belongs to the GLTP family.

Its subcellular location is the cytoplasm. It is found in the cytosol. The protein resides in the golgi apparatus. It localises to the trans-Golgi network membrane. The protein localises to the cell membrane. Its subcellular location is the endosome membrane. It is found in the nucleus outer membrane. The catalysed reaction is N-(hexadecanoyl)-sphing-4-enine-1-phosphate(in) = N-(hexadecanoyl)-sphing-4-enine-1-phosphate(out). It catalyses the reaction N-(9Z-octadecenoyl)-sphing-4-enine-1-phosphate(in) = N-(9Z-octadecenoyl)-sphing-4-enine-1-phosphate(out). In terms of biological role, mediates the intracellular transfer of ceramide-1-phosphate (C1P) between organelle membranes and the cell membrane. Required for normal structure of the Golgi stacks. Can bind phosphoceramides with a variety of aliphatic chains, but has a preference for lipids with saturated C16:0 or monounsaturated C18:1 aliphatic chains, and is inefficient with phosphoceramides containing lignoceryl (C24:0). Plays a role in the regulation of the cellular levels of ceramide-1-phosphate, and thereby contributes to the regulation of phospholipase PLA2G4A activity and the release of arachidonic acid. Has no activity with galactosylceramide, lactosylceramide, sphingomyelin, phosphatidylcholine, phosphatidic acid and ceramide. C1P transfer is stimulated by phosphatidylserine in C1P source vesicles. Regulates autophagy, inflammasome mediated IL1B and IL18 processing, and pyroptosis, but not apoptosis. The sequence is that of Ceramide-1-phosphate transfer protein from Mus musculus (Mouse).